We begin with the raw amino-acid sequence, 644 residues long: Alkyldihydroxyacetonephosphate synthase, peroxisomal (644 aa).

Residues 1–44 (MAEAAGEAGASERDPDAVRARRRLRVLSGHLLGRPQEAPSTNEC) constitute a peroxisome transit peptide. The disordered stretch occupies residues 1-70 (MAEAAGEAGA…PAAPESGTIP (70 aa)). The span at 10-19 (ASERDPDAVR) shows a compositional bias: basic and acidic residues. Residues 49-64 (AASAAGASPAASPAAP) are compositionally biased toward low complexity. Phosphoserine is present on residues serine 51 and serine 56. Lysine 88 carries the N6-acetyllysine modification. In terms of domain architecture, FAD-binding PCMH-type spans 188 to 370 (FERIPDIVVW…TEATIKIRPT (183 aa)). FAD contacts are provided by residues 220-226 (PIGGGTS), 289-295 (DSLEFSI), and 302-305 (TRAS). Position 333 is an N6-acetyllysine (lysine 333). Position 354-360 (354-360 (EGTLGVI)) interacts with FAD. Arginine 501 is a substrate binding site. Tyrosine 564 (proton donor/acceptor) is an active-site residue. Important for enzyme activity stretches follow at residues 601 to 603 (HHH) and 640 to 644 (NRNLL).

The protein belongs to the FAD-binding oxidoreductase/transferase type 4 family. As to quaternary structure, homodimer. FAD serves as cofactor.

The protein localises to the peroxisome membrane. Its subcellular location is the peroxisome. The enzyme catalyses a long chain fatty alcohol + a 1-acylglycerone 3-phosphate = a 1-O-alkylglycerone 3-phosphate + a long-chain fatty acid + H(+). The catalysed reaction is hexadecan-1-ol + 1-hexadecanoylglycerone 3-phosphate = 1-O-hexadecylglycerone 3-phosphate + hexadecanoate + H(+). It carries out the reaction 1-hexadecanoylglycerone 3-phosphate + a long-chain fatty acid = a 1-acylglycerone 3-phosphate + hexadecanoate. Its pathway is glycerolipid metabolism; ether lipid biosynthesis. With respect to regulation, inhibited by divalent cation Mg(2+). In terms of biological role, catalyzes the exchange of the acyl chain in acyl-dihydroxyacetonephosphate (acyl-DHAP) for a long chain fatty alcohol, yielding the first ether linked intermediate, i.e. alkyl-dihydroxyacetonephosphate (alkyl-DHAP), in the pathway of ether lipid biosynthesis. The sequence is that of Alkyldihydroxyacetonephosphate synthase, peroxisomal (Agps) from Rattus norvegicus (Rat).